The primary structure comprises 293 residues: Protease HtpX (293 aa).

Helical transmembrane passes span 4-24 (IGLF…VLSL) and 38-58 (LTNL…ISLF). A Zn(2+)-binding site is contributed by H145. The active site involves E146. Residue H149 participates in Zn(2+) binding. 2 consecutive transmembrane segments (helical) span residues 156 to 176 (ITLS…ARII) and 193 to 213 (IAFF…ASMI). A Zn(2+)-binding site is contributed by E222.

Belongs to the peptidase M48B family. Zn(2+) is required as a cofactor.

The protein resides in the cell inner membrane. The chain is Protease HtpX from Cellvibrio japonicus (strain Ueda107) (Pseudomonas fluorescens subsp. cellulosa).